The chain runs to 104 residues: Ig lambda-1 chain C region (104 aa).

Positions 6–99 (PSVTLFPPSS…EENTVEKSLS (94 aa)) constitute an Ig-like domain. The cysteines at positions 27 and 85 are disulfide-linked.

The chain is Ig lambda-1 chain C region from Rattus norvegicus (Rat).